Reading from the N-terminus, the 372-residue chain is MALIEPTAINNKKVIVGMSGGVDSSVSAYLLLKQGYQVEGLFMKNWEEDDTDEYCAAADDLKDAQAVCDKLGIKLHTVNFASEYWDNVFEYFLAEYKAGRTPNPDIICNKEIKFKAFLEFADDILDADYIAMGHYVRRSDESGQSQMLRGRDGNKDQSYFLYTLSHEQISRSLFPVGELEKSEVREIAKEMGLVTHDKKDSTGICFIGERKFTDFLSTFLPAQPGNIETAEGEIIGKHQGLMYHTLGQRKGLGIGGMKNSNDDPWYVVDKEMDRNVLVVGQGGHHPRLMSVGFYADQLHWVDRKGPIDGAQITVKTRYRQRDVACTLTYEGDDRIKVIFDEPVAAVTPGQSAVFYDAELCLGGGIIDSLIRE.

Residues 17 to 24 (GMSGGVDS) and Met43 contribute to the ATP site. Residues 103–105 (NPD) form an interaction with target base in tRNA region. Cys108 (nucleophile) is an active-site residue. Cys108 and Cys205 form a disulfide bridge. Residue Gly133 participates in ATP binding. Residues 155–157 (KDQ) are interaction with tRNA. Cys205 functions as the Cysteine persulfide intermediate in the catalytic mechanism. Positions 317 to 318 (RY) are interaction with tRNA.

Belongs to the MnmA/TRMU family.

It is found in the cytoplasm. It catalyses the reaction S-sulfanyl-L-cysteinyl-[protein] + uridine(34) in tRNA + AH2 + ATP = 2-thiouridine(34) in tRNA + L-cysteinyl-[protein] + A + AMP + diphosphate + H(+). Catalyzes the 2-thiolation of uridine at the wobble position (U34) of tRNA, leading to the formation of s(2)U34. This chain is tRNA-specific 2-thiouridylase MnmA, found in Shewanella sediminis (strain HAW-EB3).